The following is a 320-amino-acid chain: Aspartate carbamoyltransferase catalytic subunit (320 aa).

Residues arginine 53 and threonine 54 each coordinate carbamoyl phosphate. Lysine 82 is a binding site for L-aspartate. Residues arginine 103, histidine 131, and glutamine 134 each contribute to the carbamoyl phosphate site. Positions 164 and 227 each coordinate L-aspartate. 2 residues coordinate carbamoyl phosphate: leucine 266 and proline 267.

This sequence belongs to the aspartate/ornithine carbamoyltransferase superfamily. ATCase family. As to quaternary structure, heterododecamer (2C3:3R2) of six catalytic PyrB chains organized as two trimers (C3), and six regulatory PyrI chains organized as three dimers (R2).

The catalysed reaction is carbamoyl phosphate + L-aspartate = N-carbamoyl-L-aspartate + phosphate + H(+). It functions in the pathway pyrimidine metabolism; UMP biosynthesis via de novo pathway; (S)-dihydroorotate from bicarbonate: step 2/3. In terms of biological role, catalyzes the condensation of carbamoyl phosphate and aspartate to form carbamoyl aspartate and inorganic phosphate, the committed step in the de novo pyrimidine nucleotide biosynthesis pathway. This chain is Aspartate carbamoyltransferase catalytic subunit, found in Bifidobacterium adolescentis (strain ATCC 15703 / DSM 20083 / NCTC 11814 / E194a).